The chain runs to 334 residues: Fe-S cluster assembly protein DRE2 (334 aa).

Residues 1 to 131 are N-terminal SAM-like domain; the sequence is MASTKTGLVL…ASIKAEPVAV (131 aa). Residues 132-228 form a linker region; it reads PLRNHKKTTT…EDELVDENEM (97 aa). The segment at 135–229 is disordered; that stretch reads NHKKTTTPGT…DELVDENEMR (95 aa). Positions 140 to 150 are enriched in low complexity; sequence TTPGTTTTAKK. 2 stretches are compositionally biased toward acidic residues: residues 182–192 and 215–227; these read DSEDEDEESEG and DSIE…DENE. C238, C249, C252, and C254 together coordinate [2Fe-2S] cluster. Positions 238 to 254 are fe-S binding site A; it reads CGKSKTRRRKACKDCTC. The [4Fe-4S] cluster site is built by C297, C300, C308, and C311. 2 consecutive short sequence motifs (cx2C motif) follow at residues 297 to 300 and 308 to 311; these read CGSC and CSGC. The fe-S binding site B stretch occupies residues 297–311; the sequence is CGSCTLGDAFRCSGC.

It belongs to the anamorsin family. As to quaternary structure, monomer. Interacts with TAH18. Interacts with MIA40. Requires [2Fe-2S] cluster as cofactor. It depends on [4Fe-4S] cluster as a cofactor.

Its subcellular location is the cytoplasm. It localises to the mitochondrion intermembrane space. Component of the cytosolic iron-sulfur (Fe-S) protein assembly (CIA) machinery required for the maturation of extramitochondrial Fe-S proteins. Part of an electron transfer chain functioning in an early step of cytosolic Fe-S biogenesis, facilitating the de novo assembly of a [4Fe-4S] cluster on the scaffold complex CFD1-NBP35. Electrons are transferred to DRE2 from NADPH via the FAD- and FMN-containing protein TAH18. TAH18-DRE2 are also required for the assembly of the diferric tyrosyl radical cofactor of ribonucleotide reductase (RNR), probably by providing electrons for reduction during radical cofactor maturation in the catalytic small subunit RNR2. The protein is Fe-S cluster assembly protein DRE2 of Zygosaccharomyces rouxii (strain ATCC 2623 / CBS 732 / NBRC 1130 / NCYC 568 / NRRL Y-229).